The chain runs to 351 residues: DNA polymerase IV (351 aa).

A UmuC domain is found at 4 to 184 (FIHIDMDCFY…LPLGKIPGVG (181 aa)). Mg(2+)-binding residues include Asp-8 and Asp-102. The active site involves Glu-103.

It belongs to the DNA polymerase type-Y family. Monomer. Mg(2+) is required as a cofactor.

The protein resides in the cytoplasm. The enzyme catalyses DNA(n) + a 2'-deoxyribonucleoside 5'-triphosphate = DNA(n+1) + diphosphate. Functionally, poorly processive, error-prone DNA polymerase involved in untargeted mutagenesis. Copies undamaged DNA at stalled replication forks, which arise in vivo from mismatched or misaligned primer ends. These misaligned primers can be extended by PolIV. Exhibits no 3'-5' exonuclease (proofreading) activity. May be involved in translesional synthesis, in conjunction with the beta clamp from PolIII. This Pseudoalteromonas translucida (strain TAC 125) protein is DNA polymerase IV.